The chain runs to 855 residues: Receptor-like protein kinase THESEUS 1 (855 aa).

Positions M1–S22 are cleaved as a signal peptide. Topologically, residues S23–K415 are extracellular. N-linked (GlcNAc...) asparagine glycosylation is found at N41, N64, N75, N114, N118, N136, N143, N154, N168, N225, N242, N288, N353, and N376. The chain crosses the membrane as a helical span at residues A416 to C436. Topologically, residues Y437 to R855 are cytoplasmic. Residues F510–A783 enclose the Protein kinase domain. ATP-binding positions include L516–V524 and K538. Catalysis depends on D634, which acts as the Proton acceptor. Positions I822–R855 are disordered.

This sequence belongs to the protein kinase superfamily. Ser/Thr protein kinase family. In terms of processing, autophosphorylated. Expressed in most vegetative tissues, including leaves, stems and roots, primarily in expanding cells and vascular tissue.

The protein resides in the cell membrane. In terms of biological role, receptor-like protein kinase required for cell elongation during vegetative growth, mostly in a brassinosteroid-(BR-) independent manner. Mediates the response of growing plant cells to the perturbation of cellulose synthesis and may act as a cell-wall-integrity sensor. Controls ectopic-lignin accumulation in cellulose-deficient mutant backgrounds. This Arabidopsis thaliana (Mouse-ear cress) protein is Receptor-like protein kinase THESEUS 1 (THE1).